We begin with the raw amino-acid sequence, 437 residues long: Chromosomal replication initiator protein DnaA (437 aa).

Positions 1–72 (MEQFNAFKSL…ESLYEGIKSV (72 aa)) are domain I, interacts with DnaA modulators. The segment at 72–99 (VNFVNEQDFFFNLAKLEENSRDTLYQNS) is domain II. A domain III, AAA+ region region spans residues 100–320 (GLSKNYTFQN…GIATKLLFFA (221 aa)). Positions 144, 146, 147, and 148 each coordinate ATP. Residues 321–437 (KTSKQNLINT…LRDVITSLVI (117 aa)) are domain IV, binds dsDNA.

It belongs to the DnaA family. Oligomerizes as a right-handed, spiral filament on DNA at oriC.

The protein localises to the cytoplasm. In terms of biological role, plays an essential role in the initiation and regulation of chromosomal replication. ATP-DnaA binds to the origin of replication (oriC) to initiate formation of the DNA replication initiation complex once per cell cycle. Binds the DnaA box (a 9 base pair repeat at the origin) and separates the double-stranded (ds)DNA. Forms a right-handed helical filament on oriC DNA; dsDNA binds to the exterior of the filament while single-stranded (ss)DNA is stabiized in the filament's interior. The ATP-DnaA-oriC complex binds and stabilizes one strand of the AT-rich DNA unwinding element (DUE), permitting loading of DNA polymerase. After initiation quickly degrades to an ADP-DnaA complex that is not apt for DNA replication. Binds acidic phospholipids. The chain is Chromosomal replication initiator protein DnaA from Mycoplasma genitalium (strain ATCC 33530 / DSM 19775 / NCTC 10195 / G37) (Mycoplasmoides genitalium).